A 1016-amino-acid chain; its full sequence is Vacuolar membrane protease (1016 aa).

Residues 1–36 (MAETESGTGNSPSHRLSETSNASGNRSHQQSKQIAS) form a disordered region. Residues 1 to 57 (MAETESGTGNSPSHRLSETSNASGNRSHQQSKQIASYKSSKPNVFIRFIRAIFGYRK) lie on the Cytoplasmic side of the membrane. Residues 58 to 78 (TSVTLFVFITIIATLILVELS) traverse the membrane as a helical segment. The Vacuolar portion of the chain corresponds to 79–408 (NSLDFSVKLP…FVIPASQLVL (330 aa)). N-linked (GlcNAc...) asparagine glycosylation is found at N147 and N177. H191 and D203 together coordinate Zn(2+). The active-site Proton acceptor is E238. Residues E239, E264, and H337 each coordinate Zn(2+). A helical membrane pass occupies residues 409–429 (INVTCLAVIPLISLPLLVIIF). Over 430-438 (NYKKNWHIG) the chain is Cytoplasmic. Residues 439-459 (FINAIKFPVSLVLSICILNII) traverse the membrane as a helical segment. Topologically, residues 460–481 (THNVIASINEFLPNSSYDSIVS) are vacuolar. Residue N473 is glycosylated (N-linked (GlcNAc...) asparagine). A helical transmembrane segment spans residues 482 to 502 (TLYSLFLLLNYLFLNGINFIF). The Cytoplasmic segment spans residues 503–511 (KGYKGLYHD). Residues 512–532 (EKLILIIQTSFIYWVLLIVST) form a helical membrane-spanning segment. The Vacuolar portion of the chain corresponds to 533–547 (NKLSKNKIGNDHTGE). The helical transmembrane segment at 548–568 (FPLIMLFLLQSIGALFGLFSW) threads the bilayer. Over 569 to 646 (SFKKTTPDEL…SFSYDWSIQY (78 aa)) the chain is Cytoplasmic. Residues 598 to 622 (YGSNEAELESGEPISSNSSVSLNSS) are disordered. Positions 612 to 622 (SSNSSVSLNSS) are enriched in low complexity. A helical membrane pass occupies residues 647-667 (VVIVPLSSLIVYNTGSLLLSG). Residues 668 to 681 (LNKSIQESLNAEKL) are Vacuolar-facing. A glycan (N-linked (GlcNAc...) asparagine) is linked at N669. A helical transmembrane segment spans residues 682–702 (IFDLIQLVAVTLAIPFLPFIF). At 703-706 (KINR) the chain is on the cytoplasmic side. Residues 707–727 (LLVTALVLVFCSGFISIFLKS) form a helical membrane-spanning segment. Residues 728 to 1016 (PFDQLNPLKL…LVSVSKYVEI (289 aa)) lie on the Vacuolar side of the membrane. Residues N778, N821, N850, N875, and N977 are each glycosylated (N-linked (GlcNAc...) asparagine).

This sequence belongs to the peptidase M28 family. The cofactor is Zn(2+).

It is found in the vacuole membrane. Functionally, may be involved in vacuolar sorting and osmoregulation. The chain is Vacuolar membrane protease from Debaryomyces hansenii (strain ATCC 36239 / CBS 767 / BCRC 21394 / JCM 1990 / NBRC 0083 / IGC 2968) (Yeast).